Here is a 115-residue protein sequence, read N- to C-terminus: Parathyroid hormone (115 aa).

The N-terminal stretch at 1–25 (MMSANTVAKVMIIMLAVCLLTQTDG) is a signal peptide. Residues 26–31 (KPVRKR) constitute a propeptide that is removed on maturation. The tract at residues 51 to 69 (RMQWLRRKLQDMHNFVSLG) is important for receptor binding.

The protein belongs to the parathyroid hormone family. Interacts with PTH1R (via N-terminal extracellular domain). As to expression, highly expressed in the parathyroid gland. Also expressed in the placenta, thymus and testis.

It is found in the secreted. Parathyroid hormone elevates calcium level by dissolving the salts in bone and preventing their renal excretion. Acts by binding to its receptor, PTH1R, activating G protein-coupled receptor signaling. Stimulates [1-14C]-2-deoxy-D-glucose (2DG) transport and glycogen synthesis in osteoblastic cells. The protein is Parathyroid hormone of Mus musculus (Mouse).